Here is a 157-residue protein sequence, read N- to C-terminus: Molybdopterin synthase catalytic subunit (157 aa).

Substrate-binding positions include 103-104 (HR), K119, and 126-128 (KKE).

It belongs to the MoaE family. MOCS2B subfamily. In terms of assembly, heterotetramer; composed of 2 small (MOCS2A) and 2 large (MOCS2B) subunits.

It localises to the cytoplasm. The catalysed reaction is 2 [molybdopterin-synthase sulfur-carrier protein]-C-terminal-Gly-aminoethanethioate + cyclic pyranopterin phosphate + H2O = molybdopterin + 2 [molybdopterin-synthase sulfur-carrier protein]-C-terminal Gly-Gly + 2 H(+). It participates in cofactor biosynthesis; molybdopterin biosynthesis. Functionally, catalytic subunit of the molybdopterin synthase complex, a complex that catalyzes the conversion of precursor Z into molybdopterin. Acts by mediating the incorporation of 2 sulfur atoms from thiocarboxylated MOCS2A into precursor Z to generate a dithiolene group. The polypeptide is Molybdopterin synthase catalytic subunit (Culex quinquefasciatus (Southern house mosquito)).